The sequence spans 1387 residues: DNA-directed RNA polymerase subunit beta'' (1387 aa).

Cys-224, Cys-295, Cys-302, and Cys-305 together coordinate Zn(2+).

The protein belongs to the RNA polymerase beta' chain family. RpoC2 subfamily. In plastids the minimal PEP RNA polymerase catalytic core is composed of four subunits: alpha, beta, beta', and beta''. When a (nuclear-encoded) sigma factor is associated with the core the holoenzyme is formed, which can initiate transcription. Zn(2+) is required as a cofactor.

It is found in the plastid. The protein resides in the chloroplast. The catalysed reaction is RNA(n) + a ribonucleoside 5'-triphosphate = RNA(n+1) + diphosphate. Its function is as follows. DNA-dependent RNA polymerase catalyzes the transcription of DNA into RNA using the four ribonucleoside triphosphates as substrates. This is DNA-directed RNA polymerase subunit beta'' from Panax ginseng (Korean ginseng).